The following is a 175-amino-acid chain: uncharacterized protein (175 aa).

A helical membrane pass occupies residues threonine 143 to leucine 166.

The protein resides in the membrane. This is an uncharacterized protein from Saccharomyces cerevisiae (strain ATCC 204508 / S288c) (Baker's yeast).